The primary structure comprises 37 residues: Potassium channel toxin alpha-KTx 15.3 (37 aa).

A Pyrrolidone carboxylic acid modification is found at Gln1. Cystine bridges form between Cys8-Cys28, Cys13-Cys33, and Cys17-Cys35.

Expressed by the venom gland.

The protein localises to the secreted. Inhibits A-type (Kv4) voltage-gated potassium channels of striated neurons (Ki=131 nM), probably by acting as a pore blocker. Has also been shown to block ERG1/Kv11.1/KCNH2 potassium channels (IC(50)=7.9 uM). The presence of the Kv4-associated proteins DPP6 or DPP10 is mandatory to have high-affinity blockade of Kv4.2/KCND2 and Kv4.3/KCND3 channels (80-90% inhibition at 500 nM of toxin). In contrast, the presence of the Kv4-associated protein KChIP1/KCNIP1 does not enhance the affinity blockade (only 40% inhibition at 500 nM). In adult rat brain, the toxin binds to sites in the striatum, and cerebellum. It shares the same target in rat brain than AaTX1 (AC Q867F4) and BmTX3 (AC Q8I0L5). In DPP6 knockout mice, A-type currents are about 20-fold less affected by the toxin. In rodent models of Parkinson's disease, the toxin reduces motor symptoms and emotional and cognitive symptoms. This Androctonus mauritanicus mauritanicus (Scorpion) protein is Potassium channel toxin alpha-KTx 15.3.